A 340-amino-acid polypeptide reads, in one-letter code: HTH-type transcriptional regulator PtxS (340 aa).

Residues 12–67 (VTISEVAQAAGVSKATVSRYIGGDRQLLADATAQRIEAVIEQLGYRPNRMASALKR) enclose the HTH lacI-type domain. The H-T-H motif DNA-binding region spans 14–33 (ISEVAQAAGVSKATVSRYIG).

In terms of assembly, homodimer.

Its activity is regulated as follows. 2-ketogluconate acts as a molecular effector and causes dissociation of PtxS from its target promoter. Glucose negatively affects the molecular binding of PtxS and 2KGA, and gluconic acid inhibits the PtxS-2KGA binding reaction. Involved in the regulation of 2-ketogluconic acid metabolism via the control of the expression of the kgu operon. Binds directly to a 14-bp palindrome sequence via its conserved HTH motif. The protein is HTH-type transcriptional regulator PtxS of Pseudomonas plecoglossicida.